Reading from the N-terminus, the 438-residue chain is Ribosomal protein uS12 methylthiotransferase RimO (438 aa).

The region spanning 1-116 is the MTTase N-terminal domain; the sequence is MNVGFISLGC…IWKEIENLLD (116 aa). Residues cysteine 10, cysteine 46, cysteine 79, cysteine 147, cysteine 151, and cysteine 154 each coordinate [4Fe-4S] cluster. In terms of domain architecture, Radical SAM core spans 133-363; the sequence is TTGSNMAYLK…MALQEKISRE (231 aa). The 70-residue stretch at 366–435 folds into the TRAM domain; sequence EQKVGNVYKV…DYDLFGELYT (70 aa).

The protein belongs to the methylthiotransferase family. RimO subfamily. It depends on [4Fe-4S] cluster as a cofactor.

Its subcellular location is the cytoplasm. It carries out the reaction L-aspartate(89)-[ribosomal protein uS12]-hydrogen + (sulfur carrier)-SH + AH2 + 2 S-adenosyl-L-methionine = 3-methylsulfanyl-L-aspartate(89)-[ribosomal protein uS12]-hydrogen + (sulfur carrier)-H + 5'-deoxyadenosine + L-methionine + A + S-adenosyl-L-homocysteine + 2 H(+). Functionally, catalyzes the methylthiolation of an aspartic acid residue of ribosomal protein uS12. The sequence is that of Ribosomal protein uS12 methylthiotransferase RimO from Alkaliphilus oremlandii (strain OhILAs) (Clostridium oremlandii (strain OhILAs)).